The following is a 161-amino-acid chain: ATP synthase subunit b 1 (161 aa).

Residues 6–26 (ETWVAIAFVILMVVFGYLGVF) traverse the membrane as a helical segment.

Belongs to the ATPase B chain family. F-type ATPases have 2 components, F(1) - the catalytic core - and F(0) - the membrane proton channel. F(1) has five subunits: alpha(3), beta(3), gamma(1), delta(1), epsilon(1). F(0) has three main subunits: a(1), b(2) and c(10-14). The alpha and beta chains form an alternating ring which encloses part of the gamma chain. F(1) is attached to F(0) by a central stalk formed by the gamma and epsilon chains, while a peripheral stalk is formed by the delta and b chains.

Its subcellular location is the cell inner membrane. Functionally, f(1)F(0) ATP synthase produces ATP from ADP in the presence of a proton or sodium gradient. F-type ATPases consist of two structural domains, F(1) containing the extramembraneous catalytic core and F(0) containing the membrane proton channel, linked together by a central stalk and a peripheral stalk. During catalysis, ATP synthesis in the catalytic domain of F(1) is coupled via a rotary mechanism of the central stalk subunits to proton translocation. Its function is as follows. Component of the F(0) channel, it forms part of the peripheral stalk, linking F(1) to F(0). In Bradyrhizobium diazoefficiens (strain JCM 10833 / BCRC 13528 / IAM 13628 / NBRC 14792 / USDA 110), this protein is ATP synthase subunit b 1.